The primary structure comprises 50 residues: uncharacterized protein (50 aa).

It localises to the mitochondrion. This is an uncharacterized protein from Saccharomyces cerevisiae (strain ATCC 204508 / S288c) (Baker's yeast).